Consider the following 288-residue polypeptide: Bifunctional protein FolD (288 aa).

NADP(+)-binding positions include 166 to 168 (GRS), serine 191, and isoleucine 232.

It belongs to the tetrahydrofolate dehydrogenase/cyclohydrolase family. In terms of assembly, homodimer.

The enzyme catalyses (6R)-5,10-methylene-5,6,7,8-tetrahydrofolate + NADP(+) = (6R)-5,10-methenyltetrahydrofolate + NADPH. The catalysed reaction is (6R)-5,10-methenyltetrahydrofolate + H2O = (6R)-10-formyltetrahydrofolate + H(+). It participates in one-carbon metabolism; tetrahydrofolate interconversion. Functionally, catalyzes the oxidation of 5,10-methylenetetrahydrofolate to 5,10-methenyltetrahydrofolate and then the hydrolysis of 5,10-methenyltetrahydrofolate to 10-formyltetrahydrofolate. This Rickettsia canadensis (strain McKiel) protein is Bifunctional protein FolD.